The sequence spans 342 residues: MEKYEKLAKIGEGSYGVVFKCRNKSSGQVVAIKKFVESEDDRVVRKIALREIRMLKQLKHPNLVNLIEVFRRKRKMHLVFEYCDHTLLNELERNPNGVSDGVIKSVLWQTLQALNFCHKHNCIHRDVKPENILITKQGMIKICDFGFARILIPGDAYTDYVATRWYRAPELLVGDTKYGSSVDVWAVGCVFAELLTGQPLWPGKSDVDQLYLIIRTLGKLIPRHQSIFRSNQFFRGISIPEPEDMETLEEKFSNVQPVALSFMKGCLKMNPDERLTCAQLLDSAYFESFQEDQMKRKARSEGRSRRRQQNQLLPLIPGSHISPTPDGRKQVVQLKFDHLPNI.

Positions Y4–F286 constitute a Protein kinase domain. ATP is bound by residues I10–V18 and K33. The [NKR]KIAxRE signature appears at R45 to E51. Residue D126 is the Proton acceptor of the active site. The tract at residues K295 to R328 is disordered.

The protein belongs to the protein kinase superfamily. CMGC Ser/Thr protein kinase family. CDC2/CDKX subfamily.

It is found in the cytoplasm. It carries out the reaction L-seryl-[protein] + ATP = O-phospho-L-seryl-[protein] + ADP + H(+). The enzyme catalyses L-threonyl-[protein] + ATP = O-phospho-L-threonyl-[protein] + ADP + H(+). The chain is Cyclin-dependent kinase-like 4 (Cdkl4) from Mus musculus (Mouse).